The chain runs to 266 residues: Metallo-beta-lactamase VIM-1 (266 aa).

An N-terminal signal peptide occupies residues 1–20 (MLKVISSLLVYMTASVMAVA). Zn(2+)-binding residues include His-114, His-116, Asp-118, His-179, Cys-198, and His-240.

Belongs to the metallo-beta-lactamase superfamily. Class-B beta-lactamase family. Monomer. It depends on Zn(2+) as a cofactor.

It localises to the periplasm. The enzyme catalyses a beta-lactam + H2O = a substituted beta-amino acid. With respect to regulation, weakly inhibited by beta-lactamase-blocking agent sulbactam. Class B beta-lactamase which confers resistance to the beta-lactam antibiotics, including penicillins, cephalosporins and carbapenems. Acts via hydrolysis of the beta-lactam ring. Has penicillin-, cephalosporin- and carbapenem-hydrolyzing activities. The polypeptide is Metallo-beta-lactamase VIM-1 (Pseudomonas aeruginosa (strain ATCC 15692 / DSM 22644 / CIP 104116 / JCM 14847 / LMG 12228 / 1C / PRS 101 / PAO1)).